The primary structure comprises 820 residues: Serine/threonine-protein phosphatase 4 regulatory subunit 3 (820 aa).

One can recognise a WH1 domain in the interval 1–100 (MSDTRRRVKV…DEIWEKICQV (100 aa)). Disordered regions lie at residues 687–711 (EDEE…DFPE) and 750–820 (AANG…RLGS). The segment covering 701–711 (EKTKTEDDFPE) has biased composition (basic and acidic residues). Over residues 750-761 (AANGANSTNSKS) the composition is skewed to polar residues. The segment covering 770 to 784 (SSNGSSSKNTSLTTT) has biased composition (low complexity). A compositionally biased stretch (acidic residues) spans 798 to 809 (YPDDEDEEEEED).

Belongs to the SMEK family. In terms of assembly, serine/threonine-protein phosphatase 4 (PP4) occurs in different assemblies of the catalytic and one or more regulatory subunits.

Functionally, regulatory subunit of serine/threonine-protein phosphatase 4 (PP4). This Xenopus tropicalis (Western clawed frog) protein is Serine/threonine-protein phosphatase 4 regulatory subunit 3.